The chain runs to 93 residues: N-myc protein (93 aa).

As to quaternary structure, efficient DNA binding requires dimerization with another bHLH protein. Binds DNA as a heterodimer with MAX. In terms of tissue distribution, barely detectable in most tissues assayed.

It is found in the nucleus. In terms of biological role, may function as a transcription factor. The sequence is that of N-myc protein (mycn) from Danio rerio (Zebrafish).